The chain runs to 235 residues: Ribonuclease PH (235 aa).

Phosphate contacts are provided by residues Arg86 and 124 to 126 (GTR).

This sequence belongs to the RNase PH family. As to quaternary structure, homohexameric ring arranged as a trimer of dimers.

The enzyme catalyses tRNA(n+1) + phosphate = tRNA(n) + a ribonucleoside 5'-diphosphate. Its function is as follows. Phosphorolytic 3'-5' exoribonuclease that plays an important role in tRNA 3'-end maturation. Removes nucleotide residues following the 3'-CCA terminus of tRNAs; can also add nucleotides to the ends of RNA molecules by using nucleoside diphosphates as substrates, but this may not be physiologically important. Probably plays a role in initiation of 16S rRNA degradation (leading to ribosome degradation) during starvation. This Francisella tularensis subsp. holarctica (strain FTNF002-00 / FTA) protein is Ribonuclease PH.